The chain runs to 104 residues: PLAT domain-containing protein 3 (104 aa).

One can recognise a PLAT domain in the interval 1–104 (MSLRLYDSYG…LARDASPYEL (104 aa)).

The protein is PLAT domain-containing protein 3 of Arabidopsis thaliana (Mouse-ear cress).